A 436-amino-acid chain; its full sequence is Serine protease hepsin (436 aa).

Positions 1–29 (MAKEDEEPGAHRGGSTCSRPQPGKGGRTA) are disordered. Residues 1 to 38 (MAKEDEEPGAHRGGSTCSRPQPGKGGRTAACCSRPKVA) lie on the Cytoplasmic side of the membrane. Residues 39–59 (ALIVGTLLFLTGIGAASWAIV) form a helical; Signal-anchor for type II membrane protein membrane-spanning segment. Residues 60–436 (TILLQSDQEP…SEASGMVTQP (377 aa)) are Extracellular-facing. An SRCR domain is found at 73-170 (VQLSPGDSRL…RGRFLTATCQ (98 aa)). 8 cysteine pairs are disulfide-bonded: cysteine 96–cysteine 159, cysteine 109–cysteine 169, cysteine 138–cysteine 157, cysteine 172–cysteine 296, cysteine 207–cysteine 223, cysteine 310–cysteine 378, cysteine 341–cysteine 357, and cysteine 368–cysteine 400. Asparagine 131 carries N-linked (GlcNAc...) asparagine glycosylation. One can recognise a Peptidase S1 domain in the interval 182–424 (IVGGQDSSLG…FREWIFKAIK (243 aa)). Residues histidine 222 and aspartate 276 each act as charge relay system in the active site. The active-site Charge relay system is the serine 372.

It belongs to the peptidase S1 family. As to expression, detected in kidney, in thick ascending tubule epithelial cells (at protein level). Detected in kidney and liver.

It is found in the apical cell membrane. The protein localises to the cell membrane. The protein resides in the secreted. It catalyses the reaction Cleavage after basic amino-acid residues, with Arg strongly preferred to Lys.. In terms of biological role, serine protease that cleaves extracellular substrates, and contributes to the proteolytic processing of growth factors, such as HGF and MST1/HGFL. Plays a role in cell growth and maintenance of cell morphology. Plays a role in the proteolytic processing of ACE2. Mediates the proteolytic cleavage of urinary UMOD that is required for UMOD polymerization. The sequence is that of Serine protease hepsin (Hpn) from Mus musculus (Mouse).